A 201-amino-acid polypeptide reads, in one-letter code: Protamine-like protein 99C (201 aa).

Residues 93–143 (GGQQSSCQRQSPSARLRESERRSSRSKTLCRSAKNRQRGKPKPQQSKRRLS) form a disordered region. Residues 94 to 104 (GQQSSCQRQSP) show a composition bias toward polar residues. Residues 125 to 143 (AKNRQRGKPKPQQSKRRLS) show a composition bias toward basic residues.

This sequence belongs to the UPF0771 family.

The protein resides in the nucleus. Its subcellular location is the chromosome. Regulates chromatin compaction in spermatid nuclei and is essential for male fertility. Functions in parallel with other chromatin-condensing proteins such as ProtA, ProtB and Mst77F. This chain is Protamine-like protein 99C, found in Drosophila melanogaster (Fruit fly).